The chain runs to 137 residues: Small ribosomal subunit protein uS12 (137 aa).

Positions 33–57 (KVQTNVSSPQKRGVATRVGTMTPKK) are disordered. 3-methylthioaspartic acid is present on D102.

This sequence belongs to the universal ribosomal protein uS12 family. In terms of assembly, part of the 30S ribosomal subunit. Contacts proteins S8 and S17. May interact with IF1 in the 30S initiation complex.

Its function is as follows. With S4 and S5 plays an important role in translational accuracy. In terms of biological role, interacts with and stabilizes bases of the 16S rRNA that are involved in tRNA selection in the A site and with the mRNA backbone. Located at the interface of the 30S and 50S subunits, it traverses the body of the 30S subunit contacting proteins on the other side and probably holding the rRNA structure together. The combined cluster of proteins S8, S12 and S17 appears to hold together the shoulder and platform of the 30S subunit. The protein is Small ribosomal subunit protein uS12 of Streptococcus thermophilus (strain CNRZ 1066).